A 374-amino-acid polypeptide reads, in one-letter code: MAIRKKSTKSPPVLSHEFILQNHADIVSCVAMVFLLGLMFEITAKASIIFVTLQYNVTLPATEEQATESTSLYYYGIKDLATVFFYMLVAIIIHAIIQEYVLDKINRRMHFSKTKHSKFNESGQLSAFYLFSCIWGTFILISENYISDPTILWRAYPHNLMTFQMKFFYIAQLAYWFHAFPELYFQKTKKEDIPRQLVYIGLYLFHIAGAYLLNLNHLGLVLLVLHYFVEFLFHISRLFYFSDEKYQKGFSLWAVLFVLGRLLTLILSVLTVGFGLARAENQKLDFSAGNFNVLAVRIAVLASICITQAFMMWKFINFQLRRWREHSTFQAPVVKKKPTVTKGRSSRKGTENGVNGTVTSNGADSPRNRKEKSS.

The Cytoplasmic portion of the chain corresponds to 2-29 (AIRKKSTKSPPVLSHEFILQNHADIVSC). The chain crosses the membrane as a helical span at residues 30–50 (VAMVFLLGLMFEITAKASIIF). The Lumenal segment spans residues 51–76 (VTLQYNVTLPATEEQATESTSLYYYG). A glycan (N-linked (GlcNAc...) asparagine) is linked at Asn-56. The chain crosses the membrane as a helical span at residues 77–97 (IKDLATVFFYMLVAIIIHAII). Residues 98-121 (QEYVLDKINRRMHFSKTKHSKFNE) are Cytoplasmic-facing. The TLC domain maps to 117-326 (SKFNESGQLS…NFQLRRWREH (210 aa)). The helical transmembrane segment at 122–142 (SGQLSAFYLFSCIWGTFILIS) threads the bilayer. Over 143 to 159 (ENYISDPTILWRAYPHN) the chain is Lumenal. Residues 160–180 (LMTFQMKFFYIAQLAYWFHAF) traverse the membrane as a helical segment. Residues 181–192 (PELYFQKTKKED) lie on the Cytoplasmic side of the membrane. Residues 193 to 213 (IPRQLVYIGLYLFHIAGAYLL) form a helical membrane-spanning segment. The Lumenal portion of the chain corresponds to 214-217 (NLNH). The chain crosses the membrane as a helical span at residues 218-238 (LGLVLLVLHYFVEFLFHISRL). The Cytoplasmic portion of the chain corresponds to 239 to 251 (FYFSDEKYQKGFS). The helical transmembrane segment at 252–272 (LWAVLFVLGRLLTLILSVLTV) threads the bilayer. Residues 273 to 297 (GFGLARAENQKLDFSAGNFNVLAVR) lie on the Lumenal side of the membrane. Residues 298-318 (IAVLASICITQAFMMWKFINF) form a helical membrane-spanning segment. At 319–374 (QLRRWREHSTFQAPVVKKKPTVTKGRSSRKGTENGVNGTVTSNGADSPRNRKEKSS) the chain is on the cytoplasmic side. A compositionally biased stretch (basic residues) spans 334–347 (VKKKPTVTKGRSSR). The disordered stretch occupies residues 334 to 374 (VKKKPTVTKGRSSRKGTENGVNGTVTSNGADSPRNRKEKSS). A compositionally biased stretch (polar residues) spans 352–363 (NGVNGTVTSNGA). Phosphoserine is present on Ser-365.

Belongs to the TRAM family. Interacts with SEC61B. May interact with Derlin-1/DERL1. N-glycosylated.

It is found in the endoplasmic reticulum membrane. Functionally, involved in the translocation of nascent protein chains into or through the endoplasmic reticulum (ER) membrane by facilitating the proper chain positioning at the SEC61 channel. Regulates the exposure of nascent secretory protein chain to the cytosol during translocation into the ER. May affect the phospholipid bilayer in the vicinity of the lateral gate of the SEC61 channel, thereby facilitating ER protein transport. Intimately associates with transmembrane (TM) domain of nascent membrane proteins during the entire integration process into the ER membrane. Associates with the second TM domain of G-protein-coupled receptor opsin/OPSD nascent chain in the ER membrane, which may facilitate its integration into the membrane. Under conditions of ER stress, participates in the disposal of misfolded ER membrane proteins during the unfolded protein response (UPR), an integrated stress response (ISR) pathway, by selectively retrotranslocating misfolded ER-membrane proteins from the ER into the cytosol where they are ubiquitinated and degraded by the proteasome. This is Translocating chain-associated membrane protein 1 (TRAM1) from Canis lupus familiaris (Dog).